Consider the following 135-residue polypeptide: ATP synthase epsilon chain (135 aa).

Belongs to the ATPase epsilon chain family. As to quaternary structure, F-type ATPases have 2 components, CF(1) - the catalytic core - and CF(0) - the membrane proton channel. CF(1) has five subunits: alpha(3), beta(3), gamma(1), delta(1), epsilon(1). CF(0) has three main subunits: a, b and c.

Its subcellular location is the cell inner membrane. Produces ATP from ADP in the presence of a proton gradient across the membrane. The chain is ATP synthase epsilon chain from Bradyrhizobium sp. (strain ORS 278).